The primary structure comprises 37 residues: Large ribosomal subunit protein bL36 (37 aa).

It belongs to the bacterial ribosomal protein bL36 family.

The polypeptide is Large ribosomal subunit protein bL36 (Francisella tularensis subsp. mediasiatica (strain FSC147)).